The chain runs to 158 residues: Transcriptional repressor NrdR (158 aa).

The segment at 3-34 (CPSCQNTDSRVLESRAADGGRSVRRRRECLNC) is a zinc-finger region. One can recognise an ATP-cone domain in the interval 49–139 (ITVIKRDGCR…VYRQFRGIDD (91 aa)).

It belongs to the NrdR family. Zn(2+) serves as cofactor.

Its function is as follows. Negatively regulates transcription of bacterial ribonucleotide reductase nrd genes and operons by binding to NrdR-boxes. This chain is Transcriptional repressor NrdR, found in Synechococcus sp. (strain CC9902).